Consider the following 147-residue polypeptide: Hemoglobin subunit beta-1 (147 aa).

The residue at position 2 (Val-2) is an N-acetylvaline. Residues 3 to 147 (HLTDAEKAAV…VASALAHKYH (145 aa)) form the Globin domain. At Lys-18 the chain carries N6-succinyllysine. 3 positions are modified to phosphoserine: Ser-45, Ser-51, and Ser-53. Lys-60 bears the N6-succinyllysine mark. His-64 and His-93 together coordinate heme b. Arg-105 carries the asymmetric dimethylarginine modification. Phosphothreonine is present on Thr-124.

This sequence belongs to the globin family. In terms of assembly, heterotetramer of two alpha chains and two beta chains. As to expression, red blood cells.

Its function is as follows. Involved in oxygen transport from the lung to the various peripheral tissues. This chain is Hemoglobin subunit beta-1 (Hbb), found in Rattus norvegicus (Rat).